The primary structure comprises 340 residues: 4-amino-5-hydroxymethyl-2-methylpyrimidine phosphate synthase THI11 (340 aa).

Lysine 62 is subject to N6-(pyridoxal phosphate)lysine. The active site involves histidine 66. Residue 115-118 coordinates pyridoxal 5'-phosphate; the sequence is GEFG. A CCCFC; essential for catalytic activity, may be the site of iron coordination motif is present at residues 195–199; the sequence is CCCFC.

The protein belongs to the NMT1/THI5 family. As to quaternary structure, homodimer. It depends on Fe cation as a cofactor.

The catalysed reaction is N(6)-(pyridoxal phosphate)-L-lysyl-[4-amino-5-hydroxymethyl-2-methylpyrimidine phosphate synthase] + L-histidyl-[4-amino-5-hydroxymethyl-2-methylpyrimidine phosphate synthase] + 2 Fe(3+) + 4 H2O = L-lysyl-[4-amino-5-hydroxymethyl-2-methylpyrimidine phosphate synthase] + (2S)-2-amino-5-hydroxy-4-oxopentanoyl-[4-amino-5-hydroxymethyl-2-methylpyrimidine phosphate synthase] + 4-amino-2-methyl-5-(phosphooxymethyl)pyrimidine + 3-oxopropanoate + 2 Fe(2+) + 2 H(+). Its pathway is cofactor biosynthesis; thiamine diphosphate biosynthesis. In terms of biological role, responsible for the formation of the pyrimidine heterocycle in the thiamine biosynthesis pathway. Catalyzes the formation of hydroxymethylpyrimidine phosphate (HMP-P) from histidine and pyridoxal phosphate (PLP). The protein uses PLP and the active site histidine to form HMP-P, generating an inactive enzyme. The enzyme can only undergo a single turnover, which suggests it is a suicide enzyme. The protein is 4-amino-5-hydroxymethyl-2-methylpyrimidine phosphate synthase THI11 of Saccharomyces cerevisiae (strain ATCC 204508 / S288c) (Baker's yeast).